The primary structure comprises 313 residues: Putative serine protease 29 (313 aa).

Positions 1–22 (MPTTPDPGSEPPARTPRPPPLT) are enriched in pro residues. The disordered stretch occupies residues 1 to 27 (MPTTPDPGSEPPARTPRPPPLTPGLSP). In terms of domain architecture, Peptidase S1 spans 68 to 310 (IVGGHNAPPG…YVPWILQQVG (243 aa)). An intrachain disulfide couples cysteine 99 to cysteine 115. Histidine 114 (charge relay system) is an active-site residue. A glycan (N-linked (GlcNAc...) asparagine) is linked at asparagine 143. Residue aspartate 161 is the Charge relay system of the active site. 3 disulfide bridges follow: cysteine 193/cysteine 268, cysteine 226/cysteine 249, and cysteine 258/cysteine 286. Serine 262 serves as the catalytic Charge relay system.

The protein belongs to the peptidase S1 family.

The protein resides in the secreted. The polypeptide is Putative serine protease 29 (PRSS29P) (Homo sapiens (Human)).